The chain runs to 215 residues: Protein-L-isoaspartate O-methyltransferase (215 aa).

Serine 62 is a catalytic residue.

The protein belongs to the methyltransferase superfamily. L-isoaspartyl/D-aspartyl protein methyltransferase family.

It is found in the cytoplasm. It carries out the reaction [protein]-L-isoaspartate + S-adenosyl-L-methionine = [protein]-L-isoaspartate alpha-methyl ester + S-adenosyl-L-homocysteine. Catalyzes the methyl esterification of L-isoaspartyl residues in peptides and proteins that result from spontaneous decomposition of normal L-aspartyl and L-asparaginyl residues. It plays a role in the repair and/or degradation of damaged proteins. The sequence is that of Protein-L-isoaspartate O-methyltransferase from Nitratidesulfovibrio vulgaris (strain DSM 19637 / Miyazaki F) (Desulfovibrio vulgaris).